We begin with the raw amino-acid sequence, 179 residues long: Insulin-like growth factor 2 (179 aa).

The first 24 residues, methionine 1 to alanine 24, serve as a signal peptide directing secretion. The segment at alanine 25–phenylalanine 52 is b. 3 cysteine pairs are disulfide-bonded: cysteine 33/cysteine 71, cysteine 45/cysteine 84, and cysteine 70/cysteine 75. The segment at serine 53–arginine 64 is c. The tract at residues glycine 65–alanine 85 is a. Residues threonine 86–glutamate 91 are d. Residues arginine 92 to aspartate 179 constitute a propeptide, e peptide. Threonine 106 carries an O-linked (GalNAc...) threonine glycan. Serine 154 carries O-linked (GalNAc...) serine glycosylation. The segment at alanine 160–aspartate 179 is disordered. A glycan (O-linked (GalNAc...) threonine) is linked at threonine 163.

It belongs to the insulin family. In terms of assembly, interacts with MYORG; this interaction is required for IGF2 secretion. Interacts with integrins ITGAV:ITGB3 and ITGA6:ITGB4; integrin-binding is required for IGF2 signaling. Interacts with IGFBP2. Proteolytically processed by PCSK4, proIGF2 is cleaved at Arg-128 and Arg-92 to generate big-IGF2 and mature IGF2.

Its subcellular location is the secreted. Functionally, the insulin-like growth factors possess growth-promoting activity. Major fetal growth hormone in mammals. Plays a key role in regulating fetoplacental development. IGF2 is influenced by placental lactogen. Also involved in tissue differentiation. In adults, involved in glucose metabolism in adipose tissue, skeletal muscle and liver. Acts as a ligand for integrin which is required for IGF2 signaling. Positively regulates myogenic transcription factor MYOD1 function by facilitating the recruitment of transcriptional coactivators, thereby controlling muscle terminal differentiation. Inhibits myoblast differentiation and modulates metabolism via increasing the mitochondrial respiration rate. In terms of biological role, preptin undergoes glucose-mediated co-secretion with insulin, and acts as a physiological amplifier of glucose-mediated insulin secretion. Exhibits osteogenic properties by increasing osteoblast mitogenic activity through phosphoactivation of MAPK1 and MAPK3. The protein is Insulin-like growth factor 2 of Bos taurus (Bovine).